The following is a 632-amino-acid chain: MQSKIQKDSPLLTQEEMYLFNCGEFYYSYRKFGAHFLEHKGRWGTYFAVWAPQARQVSVVGDFNGWCGMNHSLQKWEEQGIWTLFIPGLPTGEIYKYEILTSSGESVLKADPYAFFSEVRPHTASVIYSLEDYSWGDQAWLAQRKTRNPKVLPLSSYEIHLGSWRRTEDGRFLNYAQLVTVLIPYVKSLGYTHIEILPLMEHPYDGSWGYQITGFYACTSRYGTPHDLMYLIDQCHQAGIGVILDWVPGHFCMDAHGLGKFDGSPLYEREVHEQWGTYKFDYSRSEVRSFLISNAVFWLDVFHVDGLRVDGVSSMLYLDYGKAKGAWQPNRYGGRENLEAVGFIKQLNATLHGLYPDALLIAEEATDWQGVTGPLDQEGLGFTFKWNMGWMNDTLRYIGLDFPERRSFHQLLTFPMMYAYAESYILPLSHDEVVHGKKSLLDKMPGDYGQKFAGLRGLTTYFMTSPGKKLLFMGGEIPQFIEWREDRELDWFLMDYEMHRKYHGFVQQLNGLYLREKALWEIDGDWTGFEWIDVHNHEQGVIVFCRKGKSFQDRLVVLINFQPYNYERYRIGVEMAKGYREILNTDSTDFGGWGMTNPGLLKVEGVPWHGREFSLEIRVPALGAMILKPELA.

Asp310 functions as the Nucleophile in the catalytic mechanism. The Proton donor role is filled by Glu363.

This sequence belongs to the glycosyl hydrolase 13 family. GlgB subfamily. In terms of assembly, monomer.

The enzyme catalyses Transfers a segment of a (1-&gt;4)-alpha-D-glucan chain to a primary hydroxy group in a similar glucan chain.. It functions in the pathway glycan biosynthesis; glycogen biosynthesis. Functionally, catalyzes the formation of the alpha-1,6-glucosidic linkages in glycogen by scission of a 1,4-alpha-linked oligosaccharide from growing alpha-1,4-glucan chains and the subsequent attachment of the oligosaccharide to the alpha-1,6 position. The protein is 1,4-alpha-glucan branching enzyme GlgB of Desulfitobacterium hafniense (strain Y51).